The following is a 330-amino-acid chain: Peroxidase 55 (330 aa).

The signal sequence occupies residues 1 to 30 (MDIRSDDAKKPMMMWFLGMLLFSMVAESNA). Intrachain disulfides connect C41/C121, C74/C79, C127/C326, and C206/C238. Residue H72 is the Proton acceptor of the active site. Ca(2+) contacts are provided by D73, V76, G78, D80, and S82. A substrate-binding site is contributed by P169. H199 serves as a coordination point for heme b. T200 serves as a coordination point for Ca(2+). The N-linked (GlcNAc...) asparagine glycan is linked to N215. Ca(2+) is bound by residues D250, S253, and D258.

This sequence belongs to the peroxidase family. Classical plant (class III) peroxidase subfamily. Heme b is required as a cofactor. The cofactor is Ca(2+). In terms of tissue distribution, slightly expressed in roots.

Its subcellular location is the secreted. It catalyses the reaction 2 a phenolic donor + H2O2 = 2 a phenolic radical donor + 2 H2O. Its function is as follows. Removal of H(2)O(2), oxidation of toxic reductants, biosynthesis and degradation of lignin, suberization, auxin catabolism, response to environmental stresses such as wounding, pathogen attack and oxidative stress. These functions might be dependent on each isozyme/isoform in each plant tissue. This chain is Peroxidase 55 (PER55), found in Arabidopsis thaliana (Mouse-ear cress).